A 370-amino-acid polypeptide reads, in one-letter code: 3-hydroxy-3-methylglutaryl-CoA lyase, cytoplasmic (370 aa).

Glycine 2 is lipidated: N-myristoyl glycine. The 268-residue stretch at 78-345 (VKIVEVGPRD…NTGVNLYKVM (268 aa)) folds into the Pyruvate carboxyltransferase domain. Arginine 86 is a binding site for substrate. A divalent metal cation contacts are provided by aspartate 87, histidine 278, and histidine 280. Cysteine 311 is an active-site residue. Asparagine 320 is a binding site for a divalent metal cation.

This sequence belongs to the HMG-CoA lyase family. It depends on a divalent metal cation as a cofactor.

The protein resides in the cytoplasm. Its subcellular location is the cytosol. The protein localises to the endoplasmic reticulum membrane. It catalyses the reaction (3S)-3-hydroxy-3-methylglutaryl-CoA = acetoacetate + acetyl-CoA. It participates in metabolic intermediate metabolism; (S)-3-hydroxy-3-methylglutaryl-CoA degradation; acetoacetate from (S)-3-hydroxy-3-methylglutaryl-CoA: step 1/1. Functionally, non-mitochondrial 3-hydroxy-3-methylglutaryl-CoA lyase that catalyzes a cation-dependent cleavage of (S)-3-hydroxy-3-methylglutaryl-CoA into acetyl-CoA and acetoacetate, a key step in ketogenesis, the products of which support energy production in nonhepatic animal tissues. The sequence is that of 3-hydroxy-3-methylglutaryl-CoA lyase, cytoplasmic (HMGCLL1) from Homo sapiens (Human).